Reading from the N-terminus, the 119-residue chain is Large ribosomal subunit protein bL20 (119 aa).

The protein belongs to the bacterial ribosomal protein bL20 family.

Binds directly to 23S ribosomal RNA and is necessary for the in vitro assembly process of the 50S ribosomal subunit. It is not involved in the protein synthesizing functions of that subunit. The chain is Large ribosomal subunit protein bL20 from Chloroflexus aurantiacus (strain ATCC 29366 / DSM 635 / J-10-fl).